A 127-amino-acid polypeptide reads, in one-letter code: Glycine cleavage system H protein (127 aa).

Positions 24-105 constitute a Lipoyl-binding domain; that stretch reads TLTIGITDLA…AYDAWLFKIK (82 aa). Lys-65 is modified (N6-lipoyllysine).

Belongs to the GcvH family. The glycine cleavage system is composed of four proteins: P, T, L and H. Requires (R)-lipoate as cofactor.

In terms of biological role, the glycine cleavage system catalyzes the degradation of glycine. The H protein shuttles the methylamine group of glycine from the P protein to the T protein. The chain is Glycine cleavage system H protein from Ralstonia nicotianae (strain ATCC BAA-1114 / GMI1000) (Ralstonia solanacearum).